A 179-amino-acid polypeptide reads, in one-letter code: Peptide deformylase 2 (179 aa).

Fe cation is bound by residues Cys101 and His143. Residue Glu144 is part of the active site. His147 is a Fe cation binding site.

It belongs to the polypeptide deformylase family. Fe(2+) serves as cofactor.

The enzyme catalyses N-terminal N-formyl-L-methionyl-[peptide] + H2O = N-terminal L-methionyl-[peptide] + formate. In terms of biological role, removes the formyl group from the N-terminal Met of newly synthesized proteins. Requires at least a dipeptide for an efficient rate of reaction. N-terminal L-methionine is a prerequisite for activity but the enzyme has broad specificity at other positions. The polypeptide is Peptide deformylase 2 (Pseudomonas syringae pv. tomato (strain ATCC BAA-871 / DC3000)).